The following is a 306-amino-acid chain: N-acetylmuramic acid/N-acetylglucosamine kinase (306 aa).

Position 12 (Ser12) interacts with ATP. Asn35 contacts substrate. An ATP-binding site is contributed by Thr124. Substrate-binding positions include Gly142–Gly144 and Asp149. Ala208 is a binding site for ATP.

This sequence belongs to the eukaryotic-type N-acetylglucosamine kinase family. It depends on Mg(2+) as a cofactor.

It is found in the cytoplasm. The catalysed reaction is N-acetyl-D-glucosamine + ATP = N-acetyl-D-glucosamine 6-phosphate + ADP + H(+). It catalyses the reaction N-acetyl-D-muramate + ATP = N-acetyl-D-muramate 6-phosphate + ADP + H(+). It functions in the pathway cell wall biogenesis; peptidoglycan recycling. Catalyzes the ATP-dependent phosphorylation of both cell wall (peptidoglycan) amino sugars, N-acetylmuramic acid (MurNAc) and N-acetylglucosamine (GlcNAc), at the 6-hydroxyl group. Neither the non-N-acetylated forms of the cell wall sugars, i.e., glucosamine and/or muramic acid, nor epimeric hexoses or 1,6-anhydro-MurNAc are substrates for the enzyme. May have a role in the rescue of the murein sugars GlcNAc and MurNAc released from muropeptides during cell wall turnover in C.acetobutylicum. This is N-acetylmuramic acid/N-acetylglucosamine kinase from Clostridium acetobutylicum (strain ATCC 824 / DSM 792 / JCM 1419 / IAM 19013 / LMG 5710 / NBRC 13948 / NRRL B-527 / VKM B-1787 / 2291 / W).